We begin with the raw amino-acid sequence, 104 residues long: QPKSTPTLTVFPPSSEELKENKATLVCLISNFSPSGVTVAWKANGTPITQGVDTSNPTKEGNKFMASSFLHLTSDQWRSHNSFTCQVTHEGDTVEKSLSPAECL.

One can recognise an Ig-like domain in the interval 6-99 (PTLTVFPPSS…EGDTVEKSLS (94 aa)). Cysteine 27 and cysteine 85 are disulfide-bonded.

In Mus musculus (Mouse), this protein is Ig lambda-2 chain C region (Iglc2).